We begin with the raw amino-acid sequence, 84 residues long: Small ribosomal subunit protein uS17 (84 aa).

Belongs to the universal ribosomal protein uS17 family. Part of the 30S ribosomal subunit.

One of the primary rRNA binding proteins, it binds specifically to the 5'-end of 16S ribosomal RNA. In Alkaliphilus metalliredigens (strain QYMF), this protein is Small ribosomal subunit protein uS17.